A 351-amino-acid polypeptide reads, in one-letter code: D-alanine--D-alanine ligase (351 aa).

The 209-residue stretch at 141-349 folds into the ATP-grasp domain; it reads KAAFSAAGLP…ISQLVARLIE (209 aa). Position 176-231 (176-231) interacts with ATP; it reads ETQLGYPCFIKPANLGSSVGISKAYDKKELLNGLDLAAQLDSRIVVEKNIKARELE. Mg(2+)-binding residues include Asp302, Glu316, and Asn318.

Belongs to the D-alanine--D-alanine ligase family. It depends on Mg(2+) as a cofactor. Mn(2+) is required as a cofactor.

It is found in the cytoplasm. It carries out the reaction 2 D-alanine + ATP = D-alanyl-D-alanine + ADP + phosphate + H(+). It participates in cell wall biogenesis; peptidoglycan biosynthesis. In terms of biological role, cell wall formation. The polypeptide is D-alanine--D-alanine ligase (Prochlorococcus marinus (strain SARG / CCMP1375 / SS120)).